The chain runs to 312 residues: MISNAPMHLWQGRIDLAEGLAARRWHQWVQPWAEQQPAGIALLGLACDEGVKRNQGRTGASQGPAALRAALANLAWHGTGPLYDAGDVTCTDHHLESAQKRYAERLGLLLEQGHLVLGLGGGHEIAFASFSGLADHLRRQQPCPRIGILNFDAHFDLRHAPQSSSGTPFRQIAEYCRQAGMPFEYCCLGVSELSNTQALFEQARELDVRYLLDRQMQGWNLPAVEACLDAFLDGIDVLYMTLCLDVLPASQAPGVSAPSAHGVDVQVVEHLVRRARASGKLRVADIAELNPGLDQDQRTARVAARLLASLIH.

His123, Asp152, His154, Asp156, Cys243, and Asp245 together coordinate Mn(2+).

This sequence belongs to the arginase family. Requires Mn(2+) as cofactor.

The enzyme catalyses N-formimidoyl-L-glutamate + H2O = formamide + L-glutamate. It functions in the pathway amino-acid degradation; L-histidine degradation into L-glutamate; L-glutamate from N-formimidoyl-L-glutamate (hydrolase route): step 1/1. In terms of biological role, catalyzes the conversion of N-formimidoyl-L-glutamate to L-glutamate and formamide. The chain is Formimidoylglutamase from Pseudomonas fluorescens (strain ATCC BAA-477 / NRRL B-23932 / Pf-5).